Here is a 200-residue protein sequence, read N- to C-terminus: Large ribosomal subunit protein uL4 (200 aa).

Residues 43 to 67 (RAQKTRAEVSGSGKKPWRQKGTGRA) are disordered.

This sequence belongs to the universal ribosomal protein uL4 family. Part of the 50S ribosomal subunit.

One of the primary rRNA binding proteins, this protein initially binds near the 5'-end of the 23S rRNA. It is important during the early stages of 50S assembly. It makes multiple contacts with different domains of the 23S rRNA in the assembled 50S subunit and ribosome. Its function is as follows. Forms part of the polypeptide exit tunnel. The polypeptide is Large ribosomal subunit protein uL4 (Haemophilus influenzae (strain PittEE)).